The sequence spans 361 residues: Phospho-N-acetylmuramoyl-pentapeptide-transferase (361 aa).

10 consecutive transmembrane segments (helical) span residues Leu-28–Leu-48, Thr-74–Leu-94, Ile-99–Ala-119, Ser-133–Asp-153, Leu-168–Ser-188, Val-203–Ile-223, Thr-236–Phe-256, Val-263–Ile-283, Val-288–Val-308, and Lys-338–Leu-358.

This sequence belongs to the glycosyltransferase 4 family. MraY subfamily. Mg(2+) serves as cofactor.

It is found in the cell inner membrane. It carries out the reaction UDP-N-acetyl-alpha-D-muramoyl-L-alanyl-gamma-D-glutamyl-meso-2,6-diaminopimeloyl-D-alanyl-D-alanine + di-trans,octa-cis-undecaprenyl phosphate = di-trans,octa-cis-undecaprenyl diphospho-N-acetyl-alpha-D-muramoyl-L-alanyl-D-glutamyl-meso-2,6-diaminopimeloyl-D-alanyl-D-alanine + UMP. It participates in cell wall biogenesis; peptidoglycan biosynthesis. Catalyzes the initial step of the lipid cycle reactions in the biosynthesis of the cell wall peptidoglycan: transfers peptidoglycan precursor phospho-MurNAc-pentapeptide from UDP-MurNAc-pentapeptide onto the lipid carrier undecaprenyl phosphate, yielding undecaprenyl-pyrophosphoryl-MurNAc-pentapeptide, known as lipid I. This Rickettsia canadensis (strain McKiel) protein is Phospho-N-acetylmuramoyl-pentapeptide-transferase.